The chain runs to 311 residues: Succinate dehydrogenase [ubiquinone] iron-sulfur subunit 2, mitochondrial (311 aa).

The N-terminal 63 residues, 1 to 63, are a transit peptide targeting the mitochondrion; sequence MILRRTLPRL…EEIRDHRRGD (63 aa). The tract at residues 1–70 is disordered; it reads MILRRTLPRL…RGDAAAASPA (70 aa). Basic and acidic residues predominate over residues 51 to 63; that stretch reads AKEEEIRDHRRGD. Residues 77–168 form the 2Fe-2S ferredoxin-type domain; sequence FRVYRWSPDA…ATTVTPLPHM (92 aa). Cys-128, Cys-133, and Cys-148 together coordinate [2Fe-2S] cluster. The region spanning 211 to 241 is the 4Fe-4S ferredoxin-type domain; it reads ERKRLDGLYECILCACCSAACPSYWWNAEAF. Residues Cys-221, Cys-224, and Cys-227 each contribute to the [4Fe-4S] cluster site. Residue Cys-231 participates in [3Fe-4S] cluster binding. Position 236 (Trp-236) interacts with a ubiquinone. The [3Fe-4S] cluster site is built by Cys-279 and Cys-285. Cys-289 is a binding site for [4Fe-4S] cluster.

Belongs to the succinate dehydrogenase/fumarate reductase iron-sulfur protein family. In terms of assembly, component of complex II composed of eight subunits in plants: four classical SDH subunits SDH1, SDH2, SDH3 and SDH4 (a flavoprotein (FP), an iron-sulfur protein (IP), and a cytochrome b composed of a large and a small subunit.), as well as four subunits unknown in mitochondria from bacteria and heterotrophic eukaryotes. It depends on [2Fe-2S] cluster as a cofactor. The cofactor is [3Fe-4S] cluster. Requires [4Fe-4S] cluster as cofactor.

The protein resides in the mitochondrion inner membrane. It catalyses the reaction a quinone + succinate = fumarate + a quinol. The protein operates within carbohydrate metabolism; tricarboxylic acid cycle; fumarate from succinate (eukaryal route): step 1/1. Its function is as follows. Iron-sulfur protein (IP) subunit of succinate dehydrogenase (SDH) that is involved in complex II of the mitochondrial electron transport chain and is responsible for transferring electrons from succinate to ubiquinone (coenzyme Q). The chain is Succinate dehydrogenase [ubiquinone] iron-sulfur subunit 2, mitochondrial from Oryza sativa subsp. japonica (Rice).